The chain runs to 338 residues: UDP-3-O-acylglucosamine N-acyltransferase (338 aa).

His-239 functions as the Proton acceptor in the catalytic mechanism.

Belongs to the transferase hexapeptide repeat family. LpxD subfamily. In terms of assembly, homotrimer.

The enzyme catalyses a UDP-3-O-[(3R)-3-hydroxyacyl]-alpha-D-glucosamine + a (3R)-hydroxyacyl-[ACP] = a UDP-2-N,3-O-bis[(3R)-3-hydroxyacyl]-alpha-D-glucosamine + holo-[ACP] + H(+). Its pathway is bacterial outer membrane biogenesis; LPS lipid A biosynthesis. Functionally, catalyzes the N-acylation of UDP-3-O-acylglucosamine using 3-hydroxyacyl-ACP as the acyl donor. Is involved in the biosynthesis of lipid A, a phosphorylated glycolipid that anchors the lipopolysaccharide to the outer membrane of the cell. This is UDP-3-O-acylglucosamine N-acyltransferase from Xylella fastidiosa (strain M12).